A 138-amino-acid chain; its full sequence is ATP synthase epsilon chain (138 aa).

It belongs to the ATPase epsilon chain family. As to quaternary structure, F-type ATPases have 2 components, CF(1) - the catalytic core - and CF(0) - the membrane proton channel. CF(1) has five subunits: alpha(3), beta(3), gamma(1), delta(1), epsilon(1). CF(0) has three main subunits: a, b and c.

It is found in the cellular thylakoid membrane. Produces ATP from ADP in the presence of a proton gradient across the membrane. This is ATP synthase epsilon chain (atpC) from Synechococcus sp. (strain PCC 6716).